The sequence spans 473 residues: Photosystem II CP43 reaction center protein (473 aa).

A propeptide spanning residues Met-1–Glu-14 is cleaved from the precursor. Thr-15 bears the N-acetylthreonine mark. Position 15 is a phosphothreonine (Thr-15). 5 helical membrane passes run Leu-69–Ala-93, Leu-134–Asn-155, Lys-178–Thr-200, Lys-255–Ser-275, and Trp-291–Ala-312. Glu-367 serves as a coordination point for [CaMn4O5] cluster. Residues Arg-447–Pro-471 traverse the membrane as a helical segment.

The protein belongs to the PsbB/PsbC family. PsbC subfamily. In terms of assembly, PSII is composed of 1 copy each of membrane proteins PsbA, PsbB, PsbC, PsbD, PsbE, PsbF, PsbH, PsbI, PsbJ, PsbK, PsbL, PsbM, PsbT, PsbX, PsbY, PsbZ, Psb30/Ycf12, at least 3 peripheral proteins of the oxygen-evolving complex and a large number of cofactors. It forms dimeric complexes. Requires Binds multiple chlorophylls and provides some of the ligands for the Ca-4Mn-5O cluster of the oxygen-evolving complex. It may also provide a ligand for a Cl- that is required for oxygen evolution. PSII binds additional chlorophylls, carotenoids and specific lipids. as cofactor.

The protein resides in the plastid. It localises to the chloroplast thylakoid membrane. In terms of biological role, one of the components of the core complex of photosystem II (PSII). It binds chlorophyll and helps catalyze the primary light-induced photochemical processes of PSII. PSII is a light-driven water:plastoquinone oxidoreductase, using light energy to abstract electrons from H(2)O, generating O(2) and a proton gradient subsequently used for ATP formation. This chain is Photosystem II CP43 reaction center protein, found in Angiopteris evecta (Mule's foot fern).